Consider the following 199-residue polypeptide: Outer-membrane lipoprotein LolB (199 aa).

Residues 1–28 (MSACPAPRSPVRWLHAFTLFLLLAVLAG) form the signal peptide. Cys29 carries N-palmitoyl cysteine lipidation. The S-diacylglycerol cysteine moiety is linked to residue Cys29.

Belongs to the LolB family. As to quaternary structure, monomer.

It localises to the cell outer membrane. Its function is as follows. Plays a critical role in the incorporation of lipoproteins in the outer membrane after they are released by the LolA protein. In Bordetella pertussis (strain Tohama I / ATCC BAA-589 / NCTC 13251), this protein is Outer-membrane lipoprotein LolB.